A 122-amino-acid polypeptide reads, in one-letter code: UPF0102 protein CLH_1204 (122 aa).

Belongs to the UPF0102 family.

This Clostridium botulinum (strain Alaska E43 / Type E3) protein is UPF0102 protein CLH_1204.